The sequence spans 302 residues: Phosphoribosylaminoimidazole-succinocarboxamide synthase (302 aa).

This sequence belongs to the SAICAR synthetase family.

It catalyses the reaction 5-amino-1-(5-phospho-D-ribosyl)imidazole-4-carboxylate + L-aspartate + ATP = (2S)-2-[5-amino-1-(5-phospho-beta-D-ribosyl)imidazole-4-carboxamido]succinate + ADP + phosphate + 2 H(+). It participates in purine metabolism; IMP biosynthesis via de novo pathway; 5-amino-1-(5-phospho-D-ribosyl)imidazole-4-carboxamide from 5-amino-1-(5-phospho-D-ribosyl)imidazole-4-carboxylate: step 1/2. The polypeptide is Phosphoribosylaminoimidazole-succinocarboxamide synthase (Ralstonia nicotianae (strain ATCC BAA-1114 / GMI1000) (Ralstonia solanacearum)).